The sequence spans 922 residues: Cell surface glycoprotein 2 (922 aa).

A signal peptide spans 1 to 23 (MTGNSDKVRSLFLTALMVFSVFA). N-linked (GlcNAc...) asparagine glycosylation is found at N37, N56, N110, N220, N251, N262, and N292. An N-linked (GalNAc...) asparagine glycan is attached at N307. N319, N344, N396, N437, N490, N523, N557, N574, N587, N616, N700, N717, N809, N838, and N847 each carry an N-linked (GlcNAc...) asparagine glycan. The tract at residues 816-899 (PHQDTNGNEE…GTETTEAEGP (84 aa)) is disordered. Residues 835–850 (YTQNGSAVTDSANVTV) show a composition bias toward polar residues. Residues 853-887 (EEPEDTPEDTPEDTPEDTPEDTPEDTPADTPEDTP) are compositionally biased toward acidic residues. Residues 888–899 (DTGTETTEAEGP) are compositionally biased toward low complexity. Residues 898-918 (GPGFTAAIALIALVAAALLAV) form a helical membrane-spanning segment. Positions 899-901 (PGF) match the PGF sorting signal motif.

It belongs to the halobacterial S-layer protein family. In terms of processing, N-glycosylated on Asn-307; this N-linked glycan is a branched trisaccharide containing 2-amino-6-sulfo-2,6-dideoxy-glucose (sulfoquinovosamine). O-glycosylated on Thr residues within the DTPE repeats in the C-terminal region; glycans consist of Glc-Gal disaccharides. Post-translationally, cleaved by the archaeosortase ArtA at the C-terminus, with removal of a short hydrophobic segment. In terms of processing, lipidation.

The protein localises to the secreted. It localises to the cell wall. It is found in the S-layer. The protein resides in the cell membrane. Functionally, S-layer protein. The S-layer is a paracrystalline mono-layered assembly of proteins which coat the surface of the cell. In H.hispanica, the S-layer contains two different glycoproteins, Slg1 and Slg2, which share highly similar amino acid sequences. The sequence is that of Cell surface glycoprotein 2 from Haloarcula hispanica (strain ATCC 33960 / DSM 4426 / JCM 8911 / NBRC 102182 / NCIMB 2187 / VKM B-1755).